Here is a 623-residue protein sequence, read N- to C-terminus: Chaperone protein HtpG (623 aa).

The interval 1–341 (MEKREFKAES…SQDLSLNISR (341 aa)) is a; substrate-binding. A b region spans residues 342 to 549 (EMLQHDRQLS…EGEVSIEMEK (208 aa)). Residues 550-623 (ILSAMPNNQG…FTNDICKLMK (74 aa)) are c.

Belongs to the heat shock protein 90 family. As to quaternary structure, homodimer.

It localises to the cytoplasm. Functionally, molecular chaperone. Has ATPase activity. The sequence is that of Chaperone protein HtpG from Clostridium perfringens (strain 13 / Type A).